Consider the following 617-residue polypeptide: Sodium-coupled monocarboxylate transporter 2 (617 aa).

Topologically, residues 1–5 are extracellular; the sequence is MEVKN. The chain crosses the membrane as a helical span at residues 6-26; it reads FAVWDYVVFAALFIISSGIGV. Residues 27–47 lie on the Cytoplasmic side of the membrane; it reads FYAIKERKKATSREFLVGGRQ. Residues 48–68 traverse the membrane as a helical segment; sequence MSFGPVALSLTASFMSAVTVL. The Extracellular segment spans residues 69–80; it reads GTPADVYRFGAS. The chain crosses the membrane as a helical span at residues 81-101; the sequence is FVLFFITYGLVIILTSELFLP. At 102 to 128 the chain is on the cytoplasmic side; sequence VFYRSGITSTYEYLQLRFNKPVRYAAT. Residues 129–149 traverse the membrane as a helical segment; that stretch reads VIYIVQTILYTGVVVYAPALA. The Extracellular segment spans residues 150–157; that stretch reads LNQVTGFD. A helical membrane pass occupies residues 158 to 178; the sequence is LWGSVFATGIVCTFYCTLGGL. Residues 179-180 lie on the Cytoplasmic side of the membrane; the sequence is KA. Residues 181–201 traverse the membrane as a helical segment; sequence VVWTDAFQMVVMIVGFLTVLI. At 202-235 the chain is on the extracellular side; sequence QGSTYAGGLHNVLEQAENGSRLNIFDFDIDPLRR. Residue asparagine 219 is glycosylated (N-linked (GlcNAc...) asparagine). A helical transmembrane segment spans residues 236–256; the sequence is HTFWTISVGGTFTWLGIYGVN. Residues 257-273 lie on the Cytoplasmic side of the membrane; it reads QSTIQRCISCKTEKHAK. Residues 274-294 traverse the membrane as a helical segment; it reads LALYFNLLGLWIILLCAVFSG. Residues 295–334 lie on the Extracellular side of the membrane; it reads LTMYAHFKDCDPWTSGIISAPDQLMPYFVMELFSTMPGLP. Residues 335–357 traverse the membrane as a helical segment; sequence GLFVACAFSGTLSTVAASINALA. The Cytoplasmic segment spans residues 358 to 385; the sequence is TVTFEDFVKSCFPRLSDKLSTWISKGLC. Residues 386-406 form a helical membrane-spanning segment; sequence LLFGVICTSTAVAASLMGGVI. Residues 407–411 are Extracellular-facing; that stretch reads QAALS. Residues 412 to 432 traverse the membrane as a helical segment; that stretch reads IHGMCGGPMLGLFSLGILFPF. Over 433–437 the chain is Cytoplasmic; it reads VNWKG. Residues 438-458 form a helical membrane-spanning segment; it reads ALAGLLTGILLSFWVAIGAFI. At 459–507 the chain is on the extracellular side; sequence YPAPASKTWPLPLSTDQCGLSNVTESVPPVLSSRPAIAETWYALSYLHY. Asparagine 480 is a glycosylation site (N-linked (GlcNAc...) asparagine). Residues 508–528 traverse the membrane as a helical segment; that stretch reads STVGCLGCIAAGVIISFLTGL. The Cytoplasmic portion of the chain corresponds to 529-617; sequence QKGKDIPPLL…NMALEKITHF (89 aa).

The protein belongs to the sodium:solute symporter (SSF) (TC 2.A.21) family.

It localises to the apical cell membrane. It carries out the reaction (S)-lactate(out) + Na(+)(out) = (S)-lactate(in) + Na(+)(in). The enzyme catalyses nicotinate(out) + Na(+)(out) = nicotinate(in) + Na(+)(in). The catalysed reaction is pyruvate(out) + Na(+)(out) = pyruvate(in) + Na(+)(in). It catalyses the reaction propanoate(out) + Na(+)(out) = propanoate(in) + Na(+)(in). It carries out the reaction butanoate(out) + Na(+)(out) = butanoate(in) + Na(+)(in). The enzyme catalyses acetoacetate(out) + Na(+)(out) = acetoacetate(in) + Na(+)(in). Its function is as follows. Acts as an electroneutral and low-affinity sodium (Na(+))-dependent sodium-coupled solute transporter. Catalyzes the transport across the plasma membrane of many monocarboxylates such as lactate, pyruvate, nicotinate, propionate, butyrate and beta-D-hydroxybutyrate. May be responsible for the first step of reabsorption of monocarboxylates from the lumen of the proximal tubule of the kidney and the small intestine. May play also a role in monocarboxylates transport in the retina. Mediates electroneutral uptake of lactate, with a stoichiometry of 2 Na(+) for each lactate. The sequence is that of Sodium-coupled monocarboxylate transporter 2 (SLC5A12) from Bos taurus (Bovine).